Here is a 436-residue protein sequence, read N- to C-terminus: UDP-N-acetylmuramoylalanine--D-glutamate ligase (436 aa).

Position 112–118 (112–118 (GSNGKST)) interacts with ATP.

It belongs to the MurCDEF family.

It localises to the cytoplasm. The enzyme catalyses UDP-N-acetyl-alpha-D-muramoyl-L-alanine + D-glutamate + ATP = UDP-N-acetyl-alpha-D-muramoyl-L-alanyl-D-glutamate + ADP + phosphate + H(+). Its pathway is cell wall biogenesis; peptidoglycan biosynthesis. Functionally, cell wall formation. Catalyzes the addition of glutamate to the nucleotide precursor UDP-N-acetylmuramoyl-L-alanine (UMA). The sequence is that of UDP-N-acetylmuramoylalanine--D-glutamate ligase from Photorhabdus laumondii subsp. laumondii (strain DSM 15139 / CIP 105565 / TT01) (Photorhabdus luminescens subsp. laumondii).